The following is a 792-amino-acid chain: Ribonucleoside-diphosphate reductase large subunit (792 aa).

Substrate contacts are provided by residues T200, 215 to 216, G246, 415 to 419, and 606 to 610; these read SC, NLCAE, and PTAGT. Cysteines 216 and 431 form a disulfide. N415 (proton acceptor) is an active-site residue. C417 serves as the catalytic Cysteine radical intermediate. The active-site Proton acceptor is E419. The segment at 758–781 is disordered; sequence SPPHSGMKQDGAWLPGPKNPEEES.

This sequence belongs to the ribonucleoside diphosphate reductase large chain family. In terms of assembly, heterotetramer composed of a homodimer of the large subunit (R1) and a homodimer of the small subunit (R2). Larger multisubunit protein complex are also active, composed of (R1)n(R2)n.

The catalysed reaction is a 2'-deoxyribonucleoside 5'-diphosphate + [thioredoxin]-disulfide + H2O = a ribonucleoside 5'-diphosphate + [thioredoxin]-dithiol. In terms of biological role, ribonucleoside-diphosphate reductase holoenzyme provides the precursors necessary for viral DNA synthesis. Allows virus growth in non-dividing cells, as well as reactivation from latency in infected hosts. Catalyzes the biosynthesis of deoxyribonucleotides from the corresponding ribonucleotides. This is Ribonucleoside-diphosphate reductase large subunit from Human herpesvirus 8 type P (isolate GK18) (HHV-8).